The following is a 340-amino-acid chain: tRNA N6-adenosine threonylcarbamoyltransferase (340 aa).

Residues His111 and His115 each coordinate Fe cation. Substrate contacts are provided by residues 134–138 (LVSGG), Asp167, Gly180, and Asn276. Asp304 contributes to the Fe cation binding site.

The protein belongs to the KAE1 / TsaD family. Fe(2+) serves as cofactor.

It localises to the cytoplasm. It catalyses the reaction L-threonylcarbamoyladenylate + adenosine(37) in tRNA = N(6)-L-threonylcarbamoyladenosine(37) in tRNA + AMP + H(+). Required for the formation of a threonylcarbamoyl group on adenosine at position 37 (t(6)A37) in tRNAs that read codons beginning with adenine. Is involved in the transfer of the threonylcarbamoyl moiety of threonylcarbamoyl-AMP (TC-AMP) to the N6 group of A37, together with TsaE and TsaB. TsaD likely plays a direct catalytic role in this reaction. This Helicobacter pylori (strain J99 / ATCC 700824) (Campylobacter pylori J99) protein is tRNA N6-adenosine threonylcarbamoyltransferase.